The following is a 227-amino-acid chain: 7-cyano-7-deazaguanine synthase (227 aa).

7-17 (LSGGMDSLVTT) is a binding site for ATP. Residues Cys-187, Cys-195, Cys-198, and Cys-201 each contribute to the Zn(2+) site.

This sequence belongs to the QueC family. The cofactor is Zn(2+).

It carries out the reaction 7-carboxy-7-deazaguanine + NH4(+) + ATP = 7-cyano-7-deazaguanine + ADP + phosphate + H2O + H(+). It participates in purine metabolism; 7-cyano-7-deazaguanine biosynthesis. Its function is as follows. Catalyzes the ATP-dependent conversion of 7-carboxy-7-deazaguanine (CDG) to 7-cyano-7-deazaguanine (preQ(0)). This chain is 7-cyano-7-deazaguanine synthase, found in Chlorobium phaeovibrioides (strain DSM 265 / 1930) (Prosthecochloris vibrioformis (strain DSM 265)).